The chain runs to 647 residues: Acetyl-coenzyme A synthetase (647 aa).

CoA is bound by residues 189-192, threonine 307, and asparagine 331; that span reads RGGK. Residues 383 to 385, 407 to 412, aspartate 496, and arginine 511 contribute to the ATP site; these read GEP and DTWWQT. Serine 519 is a binding site for CoA. Arginine 522 is an ATP binding site. Histidine 535 and valine 538 together coordinate Mg(2+). Residue arginine 580 coordinates CoA. Lysine 605 bears the N6-acetyllysine mark.

The protein belongs to the ATP-dependent AMP-binding enzyme family. Mg(2+) serves as cofactor. Acetylated. Deacetylation by the SIR2-homolog deacetylase activates the enzyme.

The catalysed reaction is acetate + ATP + CoA = acetyl-CoA + AMP + diphosphate. In terms of biological role, catalyzes the conversion of acetate into acetyl-CoA (AcCoA), an essential intermediate at the junction of anabolic and catabolic pathways. AcsA undergoes a two-step reaction. In the first half reaction, AcsA combines acetate with ATP to form acetyl-adenylate (AcAMP) intermediate. In the second half reaction, it can then transfer the acetyl group from AcAMP to the sulfhydryl group of CoA, forming the product AcCoA. The chain is Acetyl-coenzyme A synthetase from Syntrophus aciditrophicus (strain SB).